A 239-amino-acid chain; its full sequence is tRNA (guanine-N(7)-)-methyltransferase (239 aa).

Residues 1-13 (MEAEVQQGQQSPE) show a composition bias toward polar residues. Residues 1 to 30 (MEAEVQQGQQSPEGQLEKRPPSPPWAGIPL) form a disordered region. Positions 72, 97, 124, and 147 each coordinate S-adenosyl-L-methionine. The active site involves Asp-147. 2 residues coordinate substrate: Lys-151 and Asp-183.

Belongs to the class I-like SAM-binding methyltransferase superfamily. TrmB family.

It carries out the reaction guanosine(46) in tRNA + S-adenosyl-L-methionine = N(7)-methylguanosine(46) in tRNA + S-adenosyl-L-homocysteine. The protein operates within tRNA modification; N(7)-methylguanine-tRNA biosynthesis. In terms of biological role, catalyzes the formation of N(7)-methylguanine at position 46 (m7G46) in tRNA. This Synechococcus sp. (strain JA-2-3B'a(2-13)) (Cyanobacteria bacterium Yellowstone B-Prime) protein is tRNA (guanine-N(7)-)-methyltransferase.